A 134-amino-acid chain; its full sequence is Small ribosomal subunit protein uS8 (134 aa).

This sequence belongs to the universal ribosomal protein uS8 family. In terms of assembly, part of the 30S ribosomal subunit. Contacts proteins S5 and S12.

Its function is as follows. One of the primary rRNA binding proteins, it binds directly to 16S rRNA central domain where it helps coordinate assembly of the platform of the 30S subunit. This Synechococcus sp. (strain JA-3-3Ab) (Cyanobacteria bacterium Yellowstone A-Prime) protein is Small ribosomal subunit protein uS8.